Here is a 177-residue protein sequence, read N- to C-terminus: Large ribosomal subunit protein uL6 (177 aa).

Belongs to the universal ribosomal protein uL6 family. In terms of assembly, part of the 50S ribosomal subunit.

Its function is as follows. This protein binds to the 23S rRNA, and is important in its secondary structure. It is located near the subunit interface in the base of the L7/L12 stalk, and near the tRNA binding site of the peptidyltransferase center. In Rhodopseudomonas palustris (strain BisA53), this protein is Large ribosomal subunit protein uL6.